The primary structure comprises 101 residues: Small ribosomal subunit protein uS14 (101 aa).

Belongs to the universal ribosomal protein uS14 family. As to quaternary structure, part of the 30S ribosomal subunit. Contacts proteins S3 and S10.

Binds 16S rRNA, required for the assembly of 30S particles and may also be responsible for determining the conformation of the 16S rRNA at the A site. This chain is Small ribosomal subunit protein uS14, found in Hydrogenovibrio crunogenus (strain DSM 25203 / XCL-2) (Thiomicrospira crunogena).